The following is a 391-amino-acid chain: Transmembrane protein 79 (391 aa).

Residues 1-114 (MTEPETLALL…TKSEEPFKED (114 aa)) form a disordered region. Residues 1-200 (MTEPETLALL…GREALRAVAS (200 aa)) are Cytoplasmic-facing. The segment covering 103 to 114 (APTKSEEPFKED) has biased composition (basic and acidic residues). Residues 201 to 221 (VVAALIFFPCLLYGAYAFLPF) traverse the membrane as a helical segment. Residues 222 to 240 (DAPRLPTMSSRLVYTLRCG) lie on the Extracellular side of the membrane. Residues 241 to 261 (VFATFPIVLGLLVYGLSLLCF) form a helical membrane-spanning segment. Over 262-279 (SALRPFGEPRREVEIHRQ) the chain is Cytoplasmic. The chain crosses the membrane as a helical span at residues 280 to 300 (YVAQSVQLFILYFFNLAVLST). Over 301 to 309 (YLPQDTLKL) the chain is Extracellular. Residues 310–330 (LPLLTGLFAISRLIYWLTFAV) form a helical membrane-spanning segment. At 331-339 (GRSFRGFGY) the chain is on the cytoplasmic side. The chain crosses the membrane as a helical span at residues 340–360 (GLTFLPLLAMLVWNLYYMFVV). Topologically, residues 361–391 (EPERMLTASESRLDYPDHARSVSDYRPRSWG) are extracellular.

As to expression, expressed in the epidermis of the skin. Expressed in epithelial cells of the outermost layer of the stratum granulosum (SG) and in hair follicles (at protein level).

It localises to the lysosome. The protein resides in the golgi apparatus. It is found in the trans-Golgi network. Its subcellular location is the membrane. Functionally, contributes to the epidermal integrity and skin barrier function. Plays a role in the lamellar granule (LG) secretory system and in the stratum corneum (SC) epithelial cell formation. In Mus musculus (Mouse), this protein is Transmembrane protein 79 (Tmem79).